We begin with the raw amino-acid sequence, 551 residues long: Cytochrome c oxidase subunit 1 homolog (551 aa).

Helical transmembrane passes span 14 to 34 (GELGLILVFAALGFFSIVVAA), 40 to 60 (EYAFHAYLFAAASIATVFVIG), and 88 to 108 (VGTLLAVFWGIAGFLIGVIIA). H132 provides a ligand contact to heme b. 8 helical membrane passes run 133 to 153 (TSAVIFAFGGNVLIATSFYVV), 169 to 189 (FVVLGYNFFIVIAGTGYLLGI), 202 to 222 (ADLWLTIVWVTYFLVFLGTVL), 229 to 249 (IYVANWFYLAFILTIAVLHLG), 280 to 300 (GHNAVGFFLTAGFLALMYYFI), 313 to 333 (LSIVHFWALIFLYIWAGPHHL), 345 to 365 (LGMTFSIMLWMPSWGGMINGL), and 383 to 403 (MMVVAVAFYGMATFEGPMMSV). Cu cation is bound by residues H281, H331, and H332. The heme b site is built by H419 and H421. The next 3 membrane-spanning stretches (helical) occupy residues 424–444 (ALGWVAYISFGAIYCLIPWLW), 459–479 (FWVSTLGIVLYICAMWVAGIL), and 513–533 (IGGILFLAGSLIMAWNVFMTI).

The protein belongs to the heme-copper respiratory oxidase family. The cofactor is Cu(2+). Heme b serves as cofactor.

It localises to the cell membrane. It catalyses the reaction 4 Fe(II)-[cytochrome c] + O2 + 8 H(+)(in) = 4 Fe(III)-[cytochrome c] + 2 H2O + 4 H(+)(out). Its pathway is energy metabolism; oxidative phosphorylation. In terms of biological role, cytochrome c oxidase is the component of the respiratory chain that catalyzes the reduction of oxygen to water. Subunits 1-3 form the functional core of the enzyme complex. Co I is the catalytic subunit of the enzyme. Electrons originating in cytochrome c or a quinol are transferred to the bimetallic center formed by a high-spin heme and copper B. This Azorhizobium caulinodans (strain ATCC 43989 / DSM 5975 / JCM 20966 / LMG 6465 / NBRC 14845 / NCIMB 13405 / ORS 571) protein is Cytochrome c oxidase subunit 1 homolog (fixN).